The chain runs to 428 residues: Exodeoxyribonuclease 7 large subunit (428 aa).

The protein belongs to the XseA family. In terms of assembly, heterooligomer composed of large and small subunits.

It is found in the cytoplasm. It carries out the reaction Exonucleolytic cleavage in either 5'- to 3'- or 3'- to 5'-direction to yield nucleoside 5'-phosphates.. Functionally, bidirectionally degrades single-stranded DNA into large acid-insoluble oligonucleotides, which are then degraded further into small acid-soluble oligonucleotides. The polypeptide is Exodeoxyribonuclease 7 large subunit (Mycobacterium leprae (strain TN)).